A 533-amino-acid polypeptide reads, in one-letter code: MLYEKFEYNINNLIGNFGLSKMSIAVSGGSDSVALLYLANIWAEKNNIELFVISVDHNLREQSKQETHYIQNISNSLNRKHYSLSFDHQNNFSNLQERAREGRYDLMTNLCLELDILVLLTAHHEDDYVENFCLRLERNSGIFGLSSSNINWYNNIHIIRPLYNIPKSELVEYLVSHNIKWFEDESNSSDKYRRNVIRQKLAKGADYIRHFSKPVYREEFKGDTERSTAAYTSVGEEALLRGPVKLTVSSRGLTTVKTIKSTNNFSIFNWIPWSSHGMTEVKLIHATMPREDASTGTASKLSLEAKCGKMSKAAIISQQLKTNKRIENEFKPELISAIAEAVKIFEYGFAFLDLVKFDKFSNEVKVQIINFLLIIISGQSRAARFYSVEPILKLITQDVNFKNTLHGCIIKRIQNELLIYREFGKKLPESKILLDKSVIWDNRFCITKNQETPNCFVTHLSLKDYKIIKKQLDLEPLKNLSCKNHNAVLLTLPIIKILEKVIAIPHISYYDNDMWNFEVSFSPNFVSRFTHFC.

27-32 (SGGSDS) contacts ATP.

It belongs to the tRNA(Ile)-lysidine synthase family.

The protein localises to the cytoplasm. It carries out the reaction cytidine(34) in tRNA(Ile2) + L-lysine + ATP = lysidine(34) in tRNA(Ile2) + AMP + diphosphate + H(+). In terms of biological role, ligates lysine onto the cytidine present at position 34 of the AUA codon-specific tRNA(Ile) that contains the anticodon CAU, in an ATP-dependent manner. Cytidine is converted to lysidine, thus changing the amino acid specificity of the tRNA from methionine to isoleucine. This chain is tRNA(Ile)-lysidine synthase, found in Rickettsia peacockii (strain Rustic).